We begin with the raw amino-acid sequence, 915 residues long: Protein translocase subunit SecA (915 aa).

Residues Gln-87, 105-109 (GEGKT), and Asp-512 contribute to the ATP site. Positions 881 to 915 (LPGTAPVRPEPKIGRNEPCPCGSGKKYKHCHGQLN) are disordered. Positions 899, 901, 910, and 911 each coordinate Zn(2+). Positions 905 to 915 (KKYKHCHGQLN) are enriched in basic residues.

It belongs to the SecA family. As to quaternary structure, monomer and homodimer. Part of the essential Sec protein translocation apparatus which comprises SecA, SecYEG and auxiliary proteins SecDF-YajC and YidC. It depends on Zn(2+) as a cofactor.

Its subcellular location is the cell inner membrane. The protein resides in the cytoplasm. It catalyses the reaction ATP + H2O + cellular proteinSide 1 = ADP + phosphate + cellular proteinSide 2.. Functionally, part of the Sec protein translocase complex. Interacts with the SecYEG preprotein conducting channel. Has a central role in coupling the hydrolysis of ATP to the transfer of proteins into and across the cell membrane, serving both as a receptor for the preprotein-SecB complex and as an ATP-driven molecular motor driving the stepwise translocation of polypeptide chains across the membrane. In Azotobacter vinelandii (strain DJ / ATCC BAA-1303), this protein is Protein translocase subunit SecA.